The following is a 567-amino-acid chain: DNA-binding protein REPIN1 (567 aa).

The disordered stretch occupies residues 17–52 (PRLLSGPSQESPQTLGKESRGLRQQGTSVAQSGAQA). The segment covering 22–50 (GPSQESPQTLGKESRGLRQQGTSVAQSGA) has biased composition (polar residues). Position 27 is a phosphoserine (Ser27). Thr30 is modified (phosphothreonine). Position 33 is an N6-acetyllysine (Lys33). The segment at 57 to 79 (HRCAHCRRHFPGWVALWLHTRRC) adopts a C2H2-type 1; atypical zinc-finger fold. 7 consecutive C2H2-type zinc fingers follow at residues 85-107 (LPCPECGRRFRHAPFLALHRQVH), 116-138 (FACHLCGQSFRGWVALVLHLRAH), 145-168 (IACPKCERRFWRRKQLRAHLRRCH), 177-199 (FICGNCGRSFAQWDQLVAHKRVH), 236-258 (FQCACCGKRFRHKPNLIAHRRVH), 264-286 (HQCPECGKRFTNKPYLTSHRRIH), and 292-314 (YPCKECGRRFRHKPNLLSHSKIH). Position 276 is an N6-acetyllysine (Lys276). Residues 305-315 (PNLLSHSKIHK) show a composition bias toward basic residues. The segment at 305-372 (PNLLSHSKIH…HPQDPIEAPP (68 aa)) is disordered. Positions 345–362 (PAVPLKPAQEPPPGAPPE) are enriched in pro residues. 7 consecutive C2H2-type zinc fingers follow at residues 375–397 (YSCDDCGRSFRLERFLRAHQRQH), 403–425 (FTCAECGKNFGKKTHLVAHSRVH), 431–453 (FACEECGRRFSQGSHLAAHRRDH), 459–481 (FVCPDCGKAFRHKPYLAAHRRIH), 487–509 (YVCPDCGKAFSQKSNLVSHRRIH), 515–537 (YACPDCDRSFSQKSNLITHRKSH), and 543–565 (FCCAICGQTFDDEERLLAHQKKH).

As to quaternary structure, homodimers and homomultimers. Found in a complex with RIP60 and RIP100. In terms of tissue distribution, expressed in adipose tissue and bone tissue.

Its subcellular location is the nucleus. It is found in the cytoplasm. The protein resides in the cytosol. Its function is as follows. Sequence-specific double-stranded DNA-binding protein. Binds ATT-rich and T-rich DNA sequences and facilitates DNA bending. May regulate the expression of genes involved in cellular fatty acid import, including SCARB1/CD36, and genes involved in lipid droplet formation. May regulate the expression of LCN2, and thereby influence iron metabolism and apoptosis-related pathways. May regulate the expression of genes involved in glucose transport. In Homo sapiens (Human), this protein is DNA-binding protein REPIN1 (REPIN1).